The sequence spans 127 residues: Transcription initiation factor IIA subunit 2 (127 aa).

It belongs to the TFIIA subunit 2 family. In terms of assembly, TFIIA is a heterodimer composed of the large TOA1 and the small TOA2 subunits.

Its subcellular location is the nucleus. Its function is as follows. TFIIA is a component of the transcription machinery of RNA polymerase II and plays an important role in transcriptional activation. TFIIA in a complex with tbp mediates transcriptional activity. This chain is Transcription initiation factor IIA subunit 2 (TOA2), found in Cryptococcus neoformans var. neoformans serotype D (strain B-3501A) (Filobasidiella neoformans).